Consider the following 616-residue polypeptide: Chaperone protein HscA (616 aa).

It belongs to the heat shock protein 70 family.

Functionally, chaperone involved in the maturation of iron-sulfur cluster-containing proteins. Has a low intrinsic ATPase activity which is markedly stimulated by HscB. Involved in the maturation of IscU. The sequence is that of Chaperone protein HscA from Salmonella heidelberg (strain SL476).